Here is a 283-residue protein sequence, read N- to C-terminus: MKRILIVTGQSGSGKSSALQVLEDLGYYCIDNLPLALLPEIVAKLDHENNLEQLALGVDVRSTRADMQEFDLVFEQLQKHGTVDVIYLTTQDQELIARFSASRRPHPLASRFKSLNECIQEEKQLLLPIQFRSTVHIDTTDKSVHDLKHTLLSKLGQSDKLILILQSFGYKHGIPLDADYVFDVRHLPNPHWDLELRRFSGLDEPVRRFLESSDQTNEMFDDIFHFLDKWLPVFAEGHRHYMTVSIGCTGGQHRSVYIVDRLKKALEAKWSIQVLHREMKHWS.

Residue 9 to 16 coordinates ATP; the sequence is GQSGSGKS. 59–62 contributes to the GTP binding site; the sequence is DVRS.

This sequence belongs to the RapZ-like family.

Its function is as follows. Displays ATPase and GTPase activities. The sequence is that of Nucleotide-binding protein ACIAD3059 from Acinetobacter baylyi (strain ATCC 33305 / BD413 / ADP1).